Here is a 309-residue protein sequence, read N- to C-terminus: Olfactory receptor 8U1 (309 aa).

Over 1–25 the chain is Extracellular; sequence MAHINCTQATEFILVGLTDHQELKM. The N-linked (GlcNAc...) asparagine glycan is linked to N5. A helical membrane pass occupies residues 26-46; it reads PLFVLFLSIYLFTVVGNLGLI. Topologically, residues 47-54 are cytoplasmic; it reads LLIRADTS. Residues 55-75 traverse the membrane as a helical segment; it reads LNTPMYFFLSNLAFVDFCYSS. Residues 76-99 are Extracellular-facing; that stretch reads VITPKMLGNFLYKQNVISFDACAT. The cysteines at positions 97 and 189 are disulfide-linked. Residues 100–120 form a helical membrane-spanning segment; sequence QLGCFLTFMISESLLLASMAY. Residues 121-139 lie on the Cytoplasmic side of the membrane; sequence DRYVAICNPLLYMVVMTPG. Residues 140-160 form a helical membrane-spanning segment; it reads ICIQLVAVPYSYSFLMALFHT. Residues 161 to 197 lie on the Extracellular side of the membrane; sequence ILTFRLSYCHSNIVNHFYCDDMPLLRLTCSDTRFKQL. Residues 198 to 217 traverse the membrane as a helical segment; that stretch reads WIFACAGIMFISSLLIVFVS. Residues 218 to 237 lie on the Cytoplasmic side of the membrane; sequence YMFIISAILRMHSAEGRQKA. The helical transmembrane segment at 238-258 threads the bilayer; sequence FSTCGSHMLAVTIFYGTLIFM. The Extracellular portion of the chain corresponds to 259 to 271; that stretch reads YLQPSSSHALDTD. A helical transmembrane segment spans residues 272-292; it reads KMASVFYTVIIPMLNPLIYSL. The Cytoplasmic portion of the chain corresponds to 293–309; the sequence is QNKEVKEALKKIIINKN.

This sequence belongs to the G-protein coupled receptor 1 family.

Its subcellular location is the cell membrane. Its function is as follows. Odorant receptor. The polypeptide is Olfactory receptor 8U1 (OR8U1) (Homo sapiens (Human)).